A 433-amino-acid polypeptide reads, in one-letter code: Histidine--tRNA ligase (433 aa).

It belongs to the class-II aminoacyl-tRNA synthetase family. As to quaternary structure, homodimer.

It localises to the cytoplasm. The enzyme catalyses tRNA(His) + L-histidine + ATP = L-histidyl-tRNA(His) + AMP + diphosphate + H(+). The chain is Histidine--tRNA ligase from Pseudothermotoga lettingae (strain ATCC BAA-301 / DSM 14385 / NBRC 107922 / TMO) (Thermotoga lettingae).